A 216-amino-acid chain; its full sequence is Probable GTP-binding protein EngB (216 aa).

An EngB-type G domain is found at 23-197 (EGAEIAFAGR…EHKVAGWLGL (175 aa)). Residues 31-38 (GRSNAGKS), 58-62 (GRTQL), 76-79 (DLPG), 143-146 (TKCD), and 176-178 (FSS) each bind GTP. 2 residues coordinate Mg(2+): serine 38 and threonine 60.

It belongs to the TRAFAC class TrmE-Era-EngA-EngB-Septin-like GTPase superfamily. EngB GTPase family. It depends on Mg(2+) as a cofactor.

Functionally, necessary for normal cell division and for the maintenance of normal septation. The sequence is that of Probable GTP-binding protein EngB from Aromatoleum aromaticum (strain DSM 19018 / LMG 30748 / EbN1) (Azoarcus sp. (strain EbN1)).